The primary structure comprises 883 residues: Pyruvate, phosphate dikinase 2 (883 aa).

The segment at 1 to 21 (MAPAPCGRSSQRVFHFGKGKS) is disordered. H465 acts as the Tele-phosphohistidine intermediate in catalysis. 7 residues coordinate substrate: R571, R628, E757, G778, T779, N780, and D781. A Mg(2+)-binding site is contributed by E757. A Mg(2+)-binding site is contributed by D781. C843 acts as the Proton donor in catalysis.

The protein belongs to the PEP-utilizing enzyme family. It depends on Mg(2+) as a cofactor. Expressed in leaves, roots and stems.

Its subcellular location is the cytoplasm. It carries out the reaction pyruvate + phosphate + ATP = phosphoenolpyruvate + AMP + diphosphate + H(+). Functionally, formation of phosphoenolpyruvate, which is the primary acceptor of CO(2) in C4 and some Crassulacean acid metabolism plants. This is Pyruvate, phosphate dikinase 2 from Zea mays (Maize).